The sequence spans 248 residues: Probable transcriptional regulatory protein OCAR_7305/OCA5_c08120 (248 aa).

The protein belongs to the TACO1 family.

Its subcellular location is the cytoplasm. This Afipia carboxidovorans (strain ATCC 49405 / DSM 1227 / KCTC 32145 / OM5) (Oligotropha carboxidovorans) protein is Probable transcriptional regulatory protein OCAR_7305/OCA5_c08120.